Consider the following 392-residue polypeptide: ATP phosphoribosyltransferase regulatory subunit (392 aa).

It belongs to the class-II aminoacyl-tRNA synthetase family. HisZ subfamily. Heteromultimer composed of HisG and HisZ subunits.

The protein localises to the cytoplasm. Its pathway is amino-acid biosynthesis; L-histidine biosynthesis; L-histidine from 5-phospho-alpha-D-ribose 1-diphosphate: step 1/9. Functionally, required for the first step of histidine biosynthesis. May allow the feedback regulation of ATP phosphoribosyltransferase activity by histidine. The protein is ATP phosphoribosyltransferase regulatory subunit of Synechococcus sp. (strain WH7803).